The sequence spans 172 residues: MALWPVDRFERMMMEDPMRAMDRFGRMGDMDHWMSRRMMPYWRDADHSMLHVGNQKEVINDDKKFAVSLDVKHFKPNELKVQLDDRDLTVEGMQEVKTEHGYIKKQFVHRWSLPEDCDLDAVHTELDNHGHLSIEAPEDGPSQKFQSSAHSSSAEEEEVGDIEPVNKRILYK.

The 107-residue stretch at 47–153 (HSMLHVGNQK…KFQSSAHSSS (107 aa)) folds into the sHSP domain. The interval 135 to 172 (EAPEDGPSQKFQSSAHSSSAEEEEVGDIEPVNKRILYK) is disordered.

This sequence belongs to the small heat shock protein (HSP20) family.

In Nippostrongylus brasiliensis (Rat hookworm), this protein is Heat shock protein homolog (HSP20).